The primary structure comprises 188 residues: Putative nucleotidase OB0422 (188 aa).

The protein belongs to the 5'(3')-deoxyribonucleotidase family.

The polypeptide is Putative nucleotidase OB0422 (Oceanobacillus iheyensis (strain DSM 14371 / CIP 107618 / JCM 11309 / KCTC 3954 / HTE831)).